The primary structure comprises 179 residues: ATP synthase subunit b (179 aa).

A helical membrane pass occupies residues 29–48 (VINLAILIGVLVYFGRGVLG).

It belongs to the ATPase B chain family. As to quaternary structure, F-type ATPases have 2 components, F(1) - the catalytic core - and F(0) - the membrane proton channel. F(1) has five subunits: alpha(3), beta(3), gamma(1), delta(1), epsilon(1). F(0) has four main subunits: a(1), b(1), b'(1) and c(10-14). The alpha and beta chains form an alternating ring which encloses part of the gamma chain. F(1) is attached to F(0) by a central stalk formed by the gamma and epsilon chains, while a peripheral stalk is formed by the delta, b and b' chains.

It is found in the cellular thylakoid membrane. In terms of biological role, f(1)F(0) ATP synthase produces ATP from ADP in the presence of a proton or sodium gradient. F-type ATPases consist of two structural domains, F(1) containing the extramembraneous catalytic core and F(0) containing the membrane proton channel, linked together by a central stalk and a peripheral stalk. During catalysis, ATP synthesis in the catalytic domain of F(1) is coupled via a rotary mechanism of the central stalk subunits to proton translocation. Its function is as follows. Component of the F(0) channel, it forms part of the peripheral stalk, linking F(1) to F(0). Functionally, the complex from the organism is particularly stable to disruption and remains functional after 6 hrs at 55 degrees Celsius. In Thermosynechococcus vestitus (strain NIES-2133 / IAM M-273 / BP-1), this protein is ATP synthase subunit b.